The chain runs to 254 residues: Myeloblastin (254 aa).

The signal sequence occupies residues 1-27 (MSGSYPSPKGIHPFLLLALVVGGAVQA). Residues 28-29 (SK) constitute a propeptide that is removed on maturation. One can recognise a Peptidase S1 domain in the interval 30–250 (IVGGHEARPH…YVDWIQNVLR (221 aa)). Cys-58 and Cys-74 are joined by a disulfide. Catalysis depends on charge relay system residues His-73 and Asp-120. Asn-127 and Asn-176 each carry an N-linked (GlcNAc...) asparagine glycan. 3 cysteine pairs are disulfide-bonded: Cys-154–Cys-211, Cys-184–Cys-190, and Cys-201–Cys-226. Catalysis depends on Ser-205, which acts as the Charge relay system. Positions 251 to 254 (GAEP) are excised as a propeptide.

The protein belongs to the peptidase S1 family. Elastase subfamily. As to quaternary structure, may form dimers. Interacts with CD177; the interaction tethers PRTN3 to the cell surface; the interaction is direct. Interacts with SERPINB1. Interacts with ADGRG3.

The protein localises to the lysosome. The protein resides in the secreted. Its subcellular location is the cell membrane. It localises to the membrane raft. The enzyme catalyses Hydrolysis of proteins, including elastin, by preferential cleavage: -Ala-|-Xaa- &gt; -Val-|-Xaa-.. In terms of biological role, serine protease that degrades elastin, fibronectin, laminin, vitronectin, and collagen types I, III, and IV (in vitro). By cleaving and activating receptor F2RL1/PAR-2, enhances endothelial cell barrier function and thus vascular integrity during neutrophil transendothelial migration. May play a role in neutrophil transendothelial migration, probably when associated with CD177. Triggers inflammatory processes in neutrophils by interacting with ADGRG3 upstream of F2RL1/PAR2 activation. The protein is Myeloblastin (Prtn3) of Mus musculus (Mouse).